A 509-amino-acid polypeptide reads, in one-letter code: Circadian clock oscillator protein KaiC (509 aa).

KaiC domains lie at 1 to 243 (MKDK…IIVF) and 257 to 509 (IRIS…IEKN). Gly45, Thr46, Gly47, Lys48, Thr49, Ser85, Lys220, Leu221, Arg222, Thr224, His226, Asp237, Thr286, Gly287, Thr288, Gly289, Lys290, and Thr291 together coordinate ATP. Residue Thr49 participates in Mg(2+) binding. 2 residues coordinate Mg(2+): Thr291 and Glu314. Position 327 (Trp327) interacts with ATP. Ser427 carries the post-translational modification Phosphoserine; by autocatalysis. A Phosphothreonine; by autocatalysis modification is found at Thr428. ATP is bound by residues Arg447, Lys453, Met454, Arg455, Ser457, His459, and Lys461.

This sequence belongs to the KaiC family. In terms of assembly, homohexamer; hexamerization is dependent on ATP-binding. Component of the KaiBC complex. KaiC interacts with SasA, activating its autokinase function and leading to RpaA activation. Mg(2+) serves as cofactor. Phosphorylated on serine and threonine residues by autocatalysis. Has a 4 step phosphorylation cycle; the autokinase acts first on Thr-428, then Ser-427. When Ser-427 is modified KaiC switches to an autophosphatase mode, acting first on phospho-Thr-428 then phospho-Ser-427.

It carries out the reaction L-seryl-[protein] + ATP = O-phospho-L-seryl-[protein] + ADP + H(+). It catalyses the reaction L-threonyl-[protein] + ATP = O-phospho-L-threonyl-[protein] + ADP + H(+). The catalysed reaction is ATP + H2O = ADP + phosphate + H(+). Central component of the KaiBC oscillator complex, which constitutes the main circadian regulator in cyanobacteria. Its composition changes during the circadian cycle to control KaiC phosphorylation. Autophosphorylates and has a weak ATPase activity; ATPase activity defines the circadian period. The chain is Circadian clock oscillator protein KaiC from Prochlorococcus marinus subsp. pastoris (strain CCMP1986 / NIES-2087 / MED4).